We begin with the raw amino-acid sequence, 314 residues long: Methionyl-tRNA formyltransferase (314 aa).

109 to 112 (SLLP) contributes to the (6S)-5,6,7,8-tetrahydrofolate binding site.

Belongs to the Fmt family.

It carries out the reaction L-methionyl-tRNA(fMet) + (6R)-10-formyltetrahydrofolate = N-formyl-L-methionyl-tRNA(fMet) + (6S)-5,6,7,8-tetrahydrofolate + H(+). Attaches a formyl group to the free amino group of methionyl-tRNA(fMet). The formyl group appears to play a dual role in the initiator identity of N-formylmethionyl-tRNA by promoting its recognition by IF2 and preventing the misappropriation of this tRNA by the elongation apparatus. The protein is Methionyl-tRNA formyltransferase of Alkaliphilus metalliredigens (strain QYMF).